The primary structure comprises 1325 residues: RIMS-binding protein 2 (1325 aa).

Residues 153-181 form a disordered region; the sequence is TFLSKSRSDTPRCRFDSDMDNDQNSNTSK. Residues 158-169 show a composition bias toward basic and acidic residues; it reads SRSDTPRCRFDS. The region spanning 186-253 is the SH3 1 domain; that stretch reads GKVHLCIARY…PSNFVDFVQD (68 aa). 3 Fibronectin type-III domains span residues 315-408, 411-493, and 507-608; these read VPYP…GKDV, APSN…KKEA, and PPQD…VPPS. 3 disordered regions span residues 601–778, 988–1010, and 1040–1090; these read SDLL…GSDL, DLGS…KKYE, and AAGP…SRPM. The segment covering 627 to 641 has biased composition (basic and acidic residues); that stretch reads ETKEEHLGPHLKIDE. Residues 664–676 are compositionally biased toward polar residues; sequence FPSSLQGRRSPSP. Over residues 696 to 716 the composition is skewed to basic and acidic residues; sequence MAREAAQRVAESNRMERRSVF. The segment covering 717 to 727 has biased composition (polar residues); sequence SERSNAAQYAN. 2 stretches are compositionally biased toward basic and acidic residues: residues 763–774 and 996–1010; these read CHGEDYHTESSR and PRSE…KKYE. 2 SH3 domains span residues 1121–1189 and 1225–1292; these read ISTR…EIQA and VSTR…EVPD.

The protein belongs to the RIMBP family. Interacts with RIMS1, RIMS2, CACNA1D and CACNA1B, and potentially with other Ca(2+) channel alpha-1 isoforms. As to expression, brain, cochlea and retina.

The protein resides in the cell membrane. It localises to the synapse. Its function is as follows. Plays a role in the synaptic transmission as bifunctional linker that interacts simultaneously with RIMS1, RIMS2, CACNA1D and CACNA1B. This Gallus gallus (Chicken) protein is RIMS-binding protein 2 (RIMBP2).